A 641-amino-acid chain; its full sequence is SH2 domain-containing protein A (641 aa).

Residues 355-384 are disordered; it reads VNGNGTSMEWRPQNHEEDNSSTDSENTEMR. The SH2 domain occupies 547–641; sequence WIEGFVTKEE…SRLGRIIRGI (95 aa).

In terms of processing, phosphorylated on tyrosine residues. As to expression, expressed in roots, leaves, stems and flowers.

This chain is SH2 domain-containing protein A, found in Arabidopsis thaliana (Mouse-ear cress).